Here is a 78-residue protein sequence, read N- to C-terminus: RNA-binding protein Hfq (78 aa).

The Sm domain occupies 10–69 (DPFLNALRKEHVPVSIYLVNGIKLQGHIESFDQYVVLLRNTVTQMVYKHAISTVVPARAV).

The protein belongs to the Hfq family. As to quaternary structure, homohexamer.

RNA chaperone that binds small regulatory RNA (sRNAs) and mRNAs to facilitate mRNA translational regulation in response to envelope stress, environmental stress and changes in metabolite concentrations. Also binds with high specificity to tRNAs. The polypeptide is RNA-binding protein Hfq (Herminiimonas arsenicoxydans).